A 262-amino-acid polypeptide reads, in one-letter code: Glutamine-binding protein (262 aa).

The first 26 residues, 1–26 (MKRKTVWKIWITLALIALLSITALAG), serve as a signal peptide directing secretion. Cys-27 carries N-palmitoyl cysteine lipidation. The S-diacylglycerol cysteine moiety is linked to residue Cys-27.

Belongs to the bacterial solute-binding protein 3 family.

The protein resides in the cell membrane. Involved in glutamine-transport system. Interacts with the glutamine-transport system GlnPQ. The chain is Glutamine-binding protein (glnH) from Geobacillus stearothermophilus (Bacillus stearothermophilus).